Here is a 464-residue protein sequence, read N- to C-terminus: 3-isopropylmalate dehydratase large subunit (464 aa).

[4Fe-4S] cluster-binding residues include Cys-337, Cys-397, and Cys-400.

Belongs to the aconitase/IPM isomerase family. LeuC type 1 subfamily. In terms of assembly, heterodimer of LeuC and LeuD. The cofactor is [4Fe-4S] cluster.

It catalyses the reaction (2R,3S)-3-isopropylmalate = (2S)-2-isopropylmalate. It participates in amino-acid biosynthesis; L-leucine biosynthesis; L-leucine from 3-methyl-2-oxobutanoate: step 2/4. Catalyzes the isomerization between 2-isopropylmalate and 3-isopropylmalate, via the formation of 2-isopropylmaleate. This is 3-isopropylmalate dehydratase large subunit from Bacillus cereus (strain AH187).